Here is a 601-residue protein sequence, read N- to C-terminus: Glutathione-regulated potassium-efflux system protein KefB (601 aa).

13 consecutive transmembrane segments (helical) span residues 5–25 (SLLMAGLLYLCAAVIAVPLAA), 29–49 (IGAVLGYLLAGIAIGPWGLGF), 55–75 (EILHFSELGVVFLMFIIGLEL), 87–107 (IFGVGAAQVLLSAAVLGGLLW), 115–135 (AAIIGGIGLAMSSTAMALQLM), 152–172 (VLLFQDLAVIPALALVPLLAG), 180–202 (WMKLGMKVLAFAGMLVGGRYLLR), 207–227 (FIAASGVREVFTAAALLLVLG), 230–250 (LFMEALGLSMALGTFIAGILL), 268–288 (GLLLGLFFISVGMALNLGVLY), 291–311 (ILEILAGVVMLVTVKTAVLYL), 324–344 (LQFSGVLSQGGEFAFVLFSAA), and 356–376 (PLLLVTVTLSMMTTPLLMQGV). Residues 400–519 (KPQVIVVGFG…AGVTQFSRET (120 aa)) form the RCK N-terminal domain.

It belongs to the monovalent cation:proton antiporter 2 (CPA2) transporter (TC 2.A.37) family. KefB subfamily. As to quaternary structure, interacts with the regulatory subunit KefG.

The protein resides in the cell inner membrane. Pore-forming subunit of a potassium efflux system that confers protection against electrophiles. Catalyzes K(+)/H(+) antiport. The polypeptide is Glutathione-regulated potassium-efflux system protein KefB (Erwinia tasmaniensis (strain DSM 17950 / CFBP 7177 / CIP 109463 / NCPPB 4357 / Et1/99)).